Reading from the N-terminus, the 433-residue chain is Pyrimidine-nucleoside phosphorylase (433 aa).

Residue 81-83 (KHS) participates in phosphate binding. Residues G88 and T90 each coordinate K(+). Phosphate is bound by residues T92, 108–110 (KMS), and T120. Residues R168 and K187 each coordinate substrate. Residues L243, A246, and E255 each contribute to the K(+) site.

This sequence belongs to the thymidine/pyrimidine-nucleoside phosphorylase family. As to quaternary structure, homodimer. Requires K(+) as cofactor.

The enzyme catalyses uridine + phosphate = alpha-D-ribose 1-phosphate + uracil. It carries out the reaction thymidine + phosphate = 2-deoxy-alpha-D-ribose 1-phosphate + thymine. The catalysed reaction is 2'-deoxyuridine + phosphate = 2-deoxy-alpha-D-ribose 1-phosphate + uracil. Its function is as follows. Catalyzes phosphorolysis of the pyrimidine nucleosides uridine, thymidine and 2'-deoxyuridine with the formation of the corresponding pyrimidine base and ribose-1-phosphate. The protein is Pyrimidine-nucleoside phosphorylase (pdp) of Staphylococcus aureus (strain Mu50 / ATCC 700699).